Here is a 47-residue protein sequence, read N- to C-terminus: Laccase-2d (47 aa).

Residues 2–47 (TGPVADLHIINKDLSPDGFQRPTVVAGGGRDVVSIGRAGDNVTIRF) enclose the Plastocyanin-like domain.

It belongs to the multicopper oxidase family. In terms of assembly, homodimer. Cu cation is required as a cofactor. In terms of processing, N-glycosylated; contains 17% carbohydrates.

It is found in the secreted. It carries out the reaction 4 hydroquinone + O2 = 4 benzosemiquinone + 2 H2O. With respect to regulation, inhibited by sodium azide, SDS and mercaptoethanol, but not by 4-hexyl resocinol, L-cysteine and dithiothreitol. Activity is inhibited by the heavy metal ions Cr, W, Sn, Ag(+) and Hg(2+), but not by Pb(2+), Fe(3+), Ni(2+), Li(2+), Co(2+) or Cd(2+). Lignin degradation and detoxification of lignin-derived products. Has highest activity towards ABTS, also active towards ferulic acid and guaiacol, but is not active towards tyrosine, vanillic acid, 2,5-dimethyl aniline, p-anisidine or violuric acid. This chain is Laccase-2d, found in Cerrena unicolor (Canker rot fungus).